The sequence spans 360 residues: Carbamoyl phosphate synthase small chain (360 aa).

The segment at 1 to 169 (MTKRLLILED…TKTAYPAPGI (169 aa)) is CPSase. The L-glutamine site is built by Ser-46, Gly-220, and Gly-222. Residues 172 to 358 (NIVLVDFGLK…LEMIDSWRCT (187 aa)) form the Glutamine amidotransferase type-1 domain. Cys-247 serves as the catalytic Nucleophile. 5 residues coordinate L-glutamine: Met-248, Gln-251, Asn-289, Gly-291, and Tyr-292. Residues His-331 and Asp-333 contribute to the active site.

The protein belongs to the CarA family. In terms of assembly, composed of two chains; the small (or glutamine) chain promotes the hydrolysis of glutamine to ammonia, which is used by the large (or ammonia) chain to synthesize carbamoyl phosphate. Tetramer of heterodimers (alpha,beta)4.

The enzyme catalyses hydrogencarbonate + L-glutamine + 2 ATP + H2O = carbamoyl phosphate + L-glutamate + 2 ADP + phosphate + 2 H(+). It carries out the reaction L-glutamine + H2O = L-glutamate + NH4(+). Its pathway is amino-acid biosynthesis; L-arginine biosynthesis; carbamoyl phosphate from bicarbonate: step 1/1. The protein operates within pyrimidine metabolism; UMP biosynthesis via de novo pathway; (S)-dihydroorotate from bicarbonate: step 1/3. In terms of biological role, small subunit of the glutamine-dependent carbamoyl phosphate synthetase (CPSase). CPSase catalyzes the formation of carbamoyl phosphate from the ammonia moiety of glutamine, carbonate, and phosphate donated by ATP, constituting the first step of 2 biosynthetic pathways, one leading to arginine and/or urea and the other to pyrimidine nucleotides. The small subunit (glutamine amidotransferase) binds and cleaves glutamine to supply the large subunit with the substrate ammonia. The chain is Carbamoyl phosphate synthase small chain from Streptococcus pyogenes serotype M3 (strain SSI-1).